The primary structure comprises 559 residues: Potassium-transporting ATPase potassium-binding subunit (559 aa).

The next 13 helical transmembrane spans lie at 5 to 25 (GFLL…PLGS), 27 to 47 (LARL…RILW), 63 to 83 (LLAL…LLFW), 132 to 152 (GLTV…FALI), 170 to 190 (LVRI…LFFI), 253 to 273 (LAQM…FGEA), 283 to 303 (LLWA…WAEV), 327 to 347 (FGVL…CGAV), 356 to 376 (ALGG…FGGV), 379 to 399 (GLYG…LMIG), 416 to 436 (MTAL…ALAM), 484 to 504 (LLAF…MAIA), and 524 to 544 (GALF…LTFI).

The protein belongs to the KdpA family. The system is composed of three essential subunits: KdpA, KdpB and KdpC.

Its subcellular location is the cell inner membrane. Part of the high-affinity ATP-driven potassium transport (or Kdp) system, which catalyzes the hydrolysis of ATP coupled with the electrogenic transport of potassium into the cytoplasm. This subunit binds the periplasmic potassium ions and delivers the ions to the membrane domain of KdpB through an intramembrane tunnel. The polypeptide is Potassium-transporting ATPase potassium-binding subunit (Salmonella dublin (strain CT_02021853)).